Reading from the N-terminus, the 269-residue chain is Tryptophan synthase alpha chain (269 aa).

Active-site proton acceptor residues include glutamate 49 and aspartate 60.

Belongs to the TrpA family. In terms of assembly, tetramer of two alpha and two beta chains.

The catalysed reaction is (1S,2R)-1-C-(indol-3-yl)glycerol 3-phosphate + L-serine = D-glyceraldehyde 3-phosphate + L-tryptophan + H2O. It functions in the pathway amino-acid biosynthesis; L-tryptophan biosynthesis; L-tryptophan from chorismate: step 5/5. In terms of biological role, the alpha subunit is responsible for the aldol cleavage of indoleglycerol phosphate to indole and glyceraldehyde 3-phosphate. This Enterobacter sp. (strain 638) protein is Tryptophan synthase alpha chain.